Consider the following 730-residue polypeptide: MSDRFELYLTCPKGLEGLLAEEAKGLGLDDVREHTSAIRGAADMETAYRLCLWSRLANRVLLVLKRFNMKNADDLYDGVNAVDWADHLAADGTLAVEFSGHGSGIDNTHFGALKVKDAIVDKLRNREGLRPSVEKVDPDVRVHLRLDRGEAILSLDLSGHSLHQRGYRLQQGAAPLKENLAAAVLIRAGWPRIAAEGGALADPMCGVGTFLVEAAMIAADMAPNLKRERWGFSAWLGHVPATWRKVHEEAQARAQAGLAKPPLWIRGYEADPRLIQPGRNNVERAGLSEWVKIYQGEVASFEPRPDQNQKGLVISNPPYGERLGDEASLLYLYQNLGERLRQACMGWEAAVFTGAPELGKRMGIRSHKQYAFWNGALPCKLLLFKIQPDQFVTGERREAQADSGDTHRPLPVASEPARLSEGAQMFANRLQKNLKQLGKWARKEQIDCYRVYDADMPEYALAVDLYQDWVHVQEYAAPRSIDPEKAQARLIDALSAIPQALGVDPQRVVLKRRERQSGTRQYERQATEGRFQEVSEGGVRLLVNLTDYLDTGLFLDHRPMRMRIQREAAGKRFLNLFCYTATASVHAAKGGARSTTSVDLSKTYLDWARRNLSLNGFSERNRLEQGDVMAWLEANRDTYDLIFIDPPTFSNSKRMEGVFDVQRDHVQLLDLAMARLAPGGVLYFSNNFRKFQLDEHLAARYVVEEITAQTLDPDFARNNRIHRAWRLQLR.

Positions 46–157 constitute a THUMP domain; it reads TAYRLCLWSR…RGEAILSLDL (112 aa).

This sequence belongs to the methyltransferase superfamily. RlmKL family.

Its subcellular location is the cytoplasm. The enzyme catalyses guanosine(2445) in 23S rRNA + S-adenosyl-L-methionine = N(2)-methylguanosine(2445) in 23S rRNA + S-adenosyl-L-homocysteine + H(+). It carries out the reaction guanosine(2069) in 23S rRNA + S-adenosyl-L-methionine = N(2)-methylguanosine(2069) in 23S rRNA + S-adenosyl-L-homocysteine + H(+). Specifically methylates the guanine in position 2445 (m2G2445) and the guanine in position 2069 (m7G2069) of 23S rRNA. The polypeptide is Ribosomal RNA large subunit methyltransferase K/L (Pseudomonas putida (strain W619)).